The chain runs to 244 residues: Krueppel-like factor 9 (244 aa).

Disordered stretches follow at residues 24–51 (VPEH…GDPG) and 79–143 (PSVC…EKRH). A compositionally biased stretch (basic and acidic residues) spans 32–51 (DAERLRLPEREVTKEHGDPG). At S122 the chain carries Phosphoserine. The segment covering 134–143 (KGKHASEKRH) has biased composition (basic residues). 3 C2H2-type zinc fingers span residues 143 to 167 (HKCP…YRVH), 173 to 197 (FPCT…YRTH), and 203 to 225 (FRCP…ARRH).

The protein belongs to the Sp1 C2H2-type zinc-finger protein family. As to quaternary structure, interacts with ZZEF1.

The protein localises to the nucleus. Transcription factor that binds to GC box promoter elements. Selectively activates mRNA synthesis from genes containing tandem repeats of GC boxes but represses genes with a single GC box. Acts as an epidermal circadian transcription factor regulating keratinocyte proliferation. This chain is Krueppel-like factor 9 (Klf9), found in Rattus norvegicus (Rat).